Reading from the N-terminus, the 135-residue chain is Large ribosomal subunit protein mL54 (135 aa).

Residues 1–14 constitute a mitochondrion transit peptide; that stretch reads MAAAHLLRASRVWA.

Belongs to the mitochondrion-specific ribosomal protein mL54 family. Component of the mitochondrial ribosome large subunit (39S) which comprises a 16S rRNA and about 50 distinct proteins.

The protein localises to the mitochondrion. The chain is Large ribosomal subunit protein mL54 (Mrpl54) from Mus musculus (Mouse).